The following is a 331-amino-acid chain: Putative ankyrin repeat protein FPV012 (331 aa).

4 ANK repeats span residues 11–40 (DGYTSLYKETAKGNIKKVVELLYKGVNPNT), 44–73 (DSYTPLHIAAKTGNIKIIRRLIRYGANVDK), 77–106 (DGYTALLIAICTGDIKTCNVLLDEGANPNY), and 110–139 (YGITPLVRIISYYRPTILKLLMDRGANCNQ).

In Vertebrata (FPV), this protein is Putative ankyrin repeat protein FPV012.